A 337-amino-acid chain; its full sequence is Molybdate import system permease protein MolB (337 aa).

At 1–5 (MQPDS) the chain is on the cytoplasmic side. The helical transmembrane segment at 6–25 (YPKILFGLTLLLVITAVISL) threads the bilayer. Over 26 to 51 (GIGRYSLSVPQIGQILWAKATALEID) the chain is Periplasmic. The helical transmembrane segment at 52–87 (PVQQQVIFQVRLPRILTALCVGAGLALSGVVLQGIF) threads the bilayer. Over 88–98 (RNPLVNPHIIG) the chain is Cytoplasmic. A helical membrane pass occupies residues 99-113 (VTSGSAFGGTLAIFF). Residues 114-116 (GFS) lie on the Periplasmic side of the membrane. A helical membrane pass occupies residues 117 to 140 (LYGLFTSTILFGFGTLALVFLFSF). The Cytoplasmic segment spans residues 141–146 (KFNQRS). A helical transmembrane segment spans residues 147–171 (LLMLILIGMILSGLFSALVSLLQYI). Residues 172–193 (SDTEEKLPSIVFWLMGSFATSN) are Periplasmic-facing. Residues 194–214 (WEKLLFFFVPFLLCSSILLSL) form a helical membrane-spanning segment. At 215-234 (SWRLNLLSLDEKEAKALGVK) the chain is on the cytoplasmic side. Residues 235 to 257 (MAPLRWLVIFLSGSLVACQVAIS) form a helical membrane-spanning segment. Residues 258–264 (GSIGWVG) are Periplasmic-facing. The helical transmembrane segment at 265 to 275 (LIIPHLSRMLV) threads the bilayer. Topologically, residues 276–278 (GAN) are cytoplasmic. The helical transmembrane segment at 279–304 (HQSLLPCTMLVGATYMLLVDNVARSL) threads the bilayer. The Periplasmic segment spans residues 305 to 310 (SDAEIP). A helical transmembrane segment spans residues 311-329 (ISILTALIGAPLFGVLVYK). Over 330 to 337 (LKRGGMNE) the chain is Cytoplasmic.

The protein belongs to the binding-protein-dependent transport system permease family. FecCD subfamily. As to quaternary structure, the complex is composed of two ATP-binding proteins (MolC), two transmembrane proteins (MolB) and a solute-binding protein (MolA).

Its subcellular location is the cell inner membrane. The MolBCA complex shows a decrease in affinity in the presence of increasing concentrations of substrate and nucleotide. Its function is as follows. Part of the ABC transporter complex MolBCA involved in molybdate import. Responsible for the translocation of the substrate across the membrane. Functions as a low-affinity molybdate transporter. The chain is Molybdate import system permease protein MolB from Haemophilus influenzae (strain ATCC 51907 / DSM 11121 / KW20 / Rd).